The following is a 400-amino-acid chain: Serine/threonine transporter SstT (400 aa).

A run of 10 helical transmembrane segments spans residues 11–31 (IGLVPLIIIGLVLGVLIGWLA), 45–65 (FVGALKAVAPILVFVLVMAAI), 81–101 (IMYMFGTFLAALTAVGASFLF), 138–158 (AIAEANYIGILAWAIIIGFAL), 175–195 (AISQVVKWVIALAPFGILGLV), 213–233 (ILMVLVGCMLFIALVVNPLII), 242–264 (YPLVFICLRESGITAFFTRSSAA), 295–315 (MAGAAITINVLTLAAAHTLGI), 327–347 (LVATISACGASGVAGGSLLLI), and 354–374 (FSIPNDIAMQVVAIGFIIGVI).

Belongs to the dicarboxylate/amino acid:cation symporter (DAACS) (TC 2.A.23) family.

The protein localises to the cell inner membrane. It catalyses the reaction L-serine(in) + Na(+)(in) = L-serine(out) + Na(+)(out). The catalysed reaction is L-threonine(in) + Na(+)(in) = L-threonine(out) + Na(+)(out). Involved in the import of serine and threonine into the cell, with the concomitant import of sodium (symport system). The sequence is that of Serine/threonine transporter SstT from Psychrobacter cryohalolentis (strain ATCC BAA-1226 / DSM 17306 / VKM B-2378 / K5).